Here is a 424-residue protein sequence, read N- to C-terminus: Translation initiation factor 2 subunit gamma (424 aa).

In terms of domain architecture, tr-type G spans 23 to 220 (LPEVNIGLVG…AIEETIPTPE (198 aa)). Residues 32-39 (GHVDHGKT) are G1. Mg(2+) is bound by residues Asp35, Thr39, Gly60, and Ser62. 35 to 40 (DHGKTT) is a binding site for GTP. A G2 region spans residues 60 to 64 (GISIK). Residues 107-110 (DSPG) form a G3 region. GTP is bound by residues 163–166 (NKID) and 198–200 (SAQ). The interval 163–166 (NKID) is G4. Positions 198-200 (SAQ) are G5.

The protein belongs to the TRAFAC class translation factor GTPase superfamily. Classic translation factor GTPase family. EIF2G subfamily. In terms of assembly, heterotrimer composed of an alpha, a beta and a gamma chain. Requires Mg(2+) as cofactor.

It catalyses the reaction GTP + H2O = GDP + phosphate + H(+). EIF-2 functions in the early steps of protein synthesis by forming a ternary complex with GTP and initiator tRNA. The polypeptide is Translation initiation factor 2 subunit gamma (Archaeoglobus fulgidus (strain ATCC 49558 / DSM 4304 / JCM 9628 / NBRC 100126 / VC-16)).